A 152-amino-acid chain; its full sequence is UPF0266 membrane protein plu2700 (152 aa).

The next 3 membrane-spanning stretches (helical) occupy residues Ile-6 to Val-26, Ile-45 to Tyr-65, and Ser-67 to Ile-87.

Belongs to the UPF0266 family.

The protein resides in the cell inner membrane. This Photorhabdus laumondii subsp. laumondii (strain DSM 15139 / CIP 105565 / TT01) (Photorhabdus luminescens subsp. laumondii) protein is UPF0266 membrane protein plu2700.